The primary structure comprises 138 residues: Acidic phospholipase A2 VP7 (138 aa).

The first 16 residues, 1-16 (MRTLWIVAVCLMGVEG), serve as a signal peptide directing secretion. Cystine bridges form between Cys-42–Cys-131, Cys-44–Cys-60, Cys-59–Cys-111, Cys-65–Cys-138, Cys-66–Cys-104, Cys-73–Cys-97, and Cys-91–Cys-102. Residues Tyr-43, Gly-45, and Gly-47 each coordinate Ca(2+). His-63 is an active-site residue. Asp-64 contributes to the Ca(2+) binding site. Residue Asp-105 is part of the active site.

It belongs to the phospholipase A2 family. Group II subfamily. D49 sub-subfamily. As to quaternary structure, does not form a complex. Ca(2+) serves as cofactor. As to expression, expressed by the venom gland.

It is found in the secreted. It carries out the reaction a 1,2-diacyl-sn-glycero-3-phosphocholine + H2O = a 1-acyl-sn-glycero-3-phosphocholine + a fatty acid + H(+). Functionally, snake venom phospholipase A2 (PLA2) that is not toxic by itself, but the synergistical mixture of a basic and this acidic protein is lethal. PLA2 catalyzes the calcium-dependent hydrolysis of the 2-acyl groups in 3-sn-phosphoglycerides. The protein is Acidic phospholipase A2 VP7 of Daboia palaestinae (Palestine viper).